Consider the following 82-residue polypeptide: ATP synthase subunit c (82 aa).

2 consecutive transmembrane segments (helical) span residues 3-23 and 57-77; these read PLIASASVLAAALAIGLASLG and LAFMESLTIYGLVIALVLLFA.

As to quaternary structure, F-type ATPases have 2 components, F(1) - the catalytic core - and F(0) - the membrane proton channel. F(1) has five subunits: alpha(3), beta(3), gamma(1), delta(1), epsilon(1). F(0) has four main subunits: a(1), b(1), b'(1) and c(10-14). The alpha and beta chains form an alternating ring which encloses part of the gamma chain. F(1) is attached to F(0) by a central stalk formed by the gamma and epsilon chains, while a peripheral stalk is formed by the delta, b and b' chains.

The protein localises to the cellular thylakoid membrane. Its activity is regulated as follows. Inhibited by dicyclohexylcarbodiimide. In terms of biological role, f(1)F(0) ATP synthase produces ATP from ADP in the presence of a proton or sodium gradient. F-type ATPases consist of two structural domains, F(1) containing the extramembraneous catalytic core and F(0) containing the membrane proton channel, linked together by a central stalk and a peripheral stalk. During catalysis, ATP synthesis in the catalytic domain of F(1) is coupled via a rotary mechanism of the central stalk subunits to proton translocation. Functionally, key component of the F(0) channel; it plays a direct role in translocation across the membrane. A homomeric c-ring of between 10-14 subunits forms the central stalk rotor element with the F(1) delta and epsilon subunits. The complex from the organism is particularly stable to disruption and remains functional after 6 hrs at 55 degrees Celsius. The polypeptide is ATP synthase subunit c (atpE) (Thermosynechococcus vestitus (strain NIES-2133 / IAM M-273 / BP-1)).